The following is a 222-amino-acid chain: uncharacterized protein (222 aa).

It belongs to the PhoU family.

Its subcellular location is the cytoplasm. Functionally, not known; probably involved in phosphate transport and/or metabolism. This is an uncharacterized protein from Deinococcus radiodurans (strain ATCC 13939 / DSM 20539 / JCM 16871 / CCUG 27074 / LMG 4051 / NBRC 15346 / NCIMB 9279 / VKM B-1422 / R1).